A 311-amino-acid chain; its full sequence is Ribosomal RNA large subunit methyltransferase F (311 aa).

The protein belongs to the methyltransferase superfamily. METTL16/RlmF family.

The protein resides in the cytoplasm. The enzyme catalyses adenosine(1618) in 23S rRNA + S-adenosyl-L-methionine = N(6)-methyladenosine(1618) in 23S rRNA + S-adenosyl-L-homocysteine + H(+). In terms of biological role, specifically methylates the adenine in position 1618 of 23S rRNA. The protein is Ribosomal RNA large subunit methyltransferase F of Pectobacterium atrosepticum (strain SCRI 1043 / ATCC BAA-672) (Erwinia carotovora subsp. atroseptica).